Here is a 381-residue protein sequence, read N- to C-terminus: E3 ubiquitin-protein ligase Fancl (381 aa).

The segment at 110–293 (NIYYDILALY…MFDLCYFPMP (184 aa)) is UBC-RWD region (URD). An RING-CH-type; degenerate zinc finger spans residues 303-374 (EEDNEELRCN…PFCKAKLSTS (72 aa)). Zn(2+) is bound by residues Cys311, Cys314, Cys329, Cys334, His339, Cys342, Cys364, and Cys367.

Interacts (via C-terminus) with FANCI and Fancd2.

The protein localises to the nucleus. It catalyses the reaction S-ubiquitinyl-[E2 ubiquitin-conjugating enzyme]-L-cysteine + [acceptor protein]-L-lysine = [E2 ubiquitin-conjugating enzyme]-L-cysteine + N(6)-ubiquitinyl-[acceptor protein]-L-lysine.. The protein operates within protein modification; protein ubiquitination. Its function is as follows. Ubiquitin ligase protein that mediates monoubiquitination of Fancd2. Ubiquitination of Fancd2 is stimulated by ionising radiation. Together with Fancd2, and probably FANCI, involved in DNA repair of damage caused by agents that induce interstrand cross-links but not agents that cause double strand breaks. This chain is E3 ubiquitin-protein ligase Fancl, found in Drosophila melanogaster (Fruit fly).